We begin with the raw amino-acid sequence, 527 residues long: Glutamate--cysteine ligase (527 aa).

Belongs to the glutamate--cysteine ligase type 1 family. Type 1 subfamily.

It carries out the reaction L-cysteine + L-glutamate + ATP = gamma-L-glutamyl-L-cysteine + ADP + phosphate + H(+). It functions in the pathway sulfur metabolism; glutathione biosynthesis; glutathione from L-cysteine and L-glutamate: step 1/2. The sequence is that of Glutamate--cysteine ligase from Pseudomonas aeruginosa (strain ATCC 15692 / DSM 22644 / CIP 104116 / JCM 14847 / LMG 12228 / 1C / PRS 101 / PAO1).